Reading from the N-terminus, the 115-residue chain is Large ribosomal subunit protein bL19 (115 aa).

The protein belongs to the bacterial ribosomal protein bL19 family.

Its function is as follows. This protein is located at the 30S-50S ribosomal subunit interface and may play a role in the structure and function of the aminoacyl-tRNA binding site. The protein is Large ribosomal subunit protein bL19 of Latilactobacillus sakei subsp. sakei (strain 23K) (Lactobacillus sakei subsp. sakei).